The chain runs to 300 residues: Lysophosphatidic acid:oleoyl-CoA acyltransferase 1 (300 aa).

A helical membrane pass occupies residues 33–53; the sequence is LLGILGVKTIIMLPLIMLYLL. Positions 101 to 106 match the HXXXXD motif motif; it reads CTSPLD.

It belongs to the 1-acyl-sn-glycerol-3-phosphate acyltransferase family.

The protein resides in the lipid droplet. The protein localises to the endoplasmic reticulum membrane. It carries out the reaction a 1-acyl-sn-glycero-3-phosphate + an acyl-CoA = a 1,2-diacyl-sn-glycero-3-phosphate + CoA. The catalysed reaction is 1-hexadecanoyl-sn-glycero-3-phosphate + (9Z)-octadecenoyl-CoA = 1-hexadecanoyl-2-(9Z-octadecenoyl)-sn-glycero-3-phosphate + CoA. Functionally, acyl-CoA-dependent lysophosphatidic acid acyltransferase with preference for oleoyl-CoA. Involved in triacylglyceride homeostasis and lipid droplet formation. Involved in vacuolar protein sorting. The chain is Lysophosphatidic acid:oleoyl-CoA acyltransferase 1 from Saccharomyces cerevisiae (strain ATCC 204508 / S288c) (Baker's yeast).